The sequence spans 245 residues: QLRAFVCRLSSVIFYETMYVGIVLLGLIAFDRFLKIIRPLRNIFLKKTVFAKTVSVFIWSFFFFISLPNMILSNKEATPSSVKKCASLKGPLGLKWHQIVNNISQFIFWTVFVLMLVFYVVIAKKVYDSYRKSKSKDRKNNKKLEGKVFVVVAVFFVCFAPFHFTRVPYTYSQTNNKTDCRLQNQLFIAKETTLFLAATNICMDPLIYIFLCKKFTEKLPCMRGRKTIASSQENQSSQTDNITLG.

Over 1 to 9 (QLRAFVCRL) the chain is Extracellular. Cysteine 7 and cysteine 85 form a disulfide bridge. Residues 10–30 (SSVIFYETMYVGIVLLGLIAF) form a helical membrane-spanning segment. Residues 31-35 (DRFLK) lie on the Cytoplasmic side of the membrane. Residues 36-56 (IIRPLRNIFLKKTVFAKTVSV) form a helical membrane-spanning segment. Residues 57-85 (FIWSFFFFISLPNMILSNKEATPSSVKKC) lie on the Extracellular side of the membrane. A helical transmembrane segment spans residues 86 to 106 (ASLKGPLGLKWHQIVNNISQF). Topologically, residues 107-126 (IFWTVFVLMLVFYVVIAKKV) are cytoplasmic. The chain crosses the membrane as a helical span at residues 127–147 (YDSYRKSKSKDRKNNKKLEGK). At 148–174 (VFVVVAVFFVCFAPFHFTRVPYTYSQT) the chain is on the extracellular side. Residues 175–195 (NNKTDCRLQNQLFIAKETTLF) form a helical membrane-spanning segment. Topologically, residues 196 to 245 (LAATNICMDPLIYIFLCKKFTEKLPCMRGRKTIASSQENQSSQTDNITLG) are cytoplasmic.

The protein belongs to the G-protein coupled receptor 1 family.

Its subcellular location is the cell membrane. Its function is as follows. Receptor for ADP. Coupled to G(i)-proteins. May play a role in hematopoiesis and the immune system. The polypeptide is P2Y purinoceptor 13 (P2RY13) (Macaca fascicularis (Crab-eating macaque)).